Reading from the N-terminus, the 336-residue chain is Transmembrane protein 19 (336 aa).

The next 6 membrane-spanning stretches (helical) occupy residues 15 to 35 (MITNIVILSLIICISLAFWII), 49 to 69 (ISPWRWLFSVVVPVLIVSNGL), 84 to 104 (VVGFILTIANFSFFTSLLMFF), 218 to 238 (VTVVGLVSSLLGGTFVGIAYF), 257 to 277 (IIAFGGLAGLLGSIVDSYLGA), and 313 to 333 (VNLFSSVLIALLLPTAAWGFW).

This sequence belongs to the TMEM19 family.

It localises to the membrane. The sequence is that of Transmembrane protein 19 (TMEM19) from Homo sapiens (Human).